The primary structure comprises 145 residues: Basic phospholipase A2 PC17 (145 aa).

A signal peptide spans 1–21 (MYPAHLLLLLAVCVSLLGASA). Residues 22-27 (IPPLPL) constitute a propeptide that is removed on maturation. Intrachain disulfides connect cysteine 38/cysteine 98, cysteine 54/cysteine 144, cysteine 56/cysteine 72, cysteine 71/cysteine 125, cysteine 78/cysteine 118, cysteine 87/cysteine 111, and cysteine 105/cysteine 116. Residues tyrosine 55, glycine 57, and glycine 59 each coordinate Ca(2+). Residue histidine 75 is part of the active site. A Ca(2+)-binding site is contributed by aspartate 76. Aspartate 119 is an active-site residue.

This sequence belongs to the phospholipase A2 family. Group I subfamily. D49 sub-subfamily. The cofactor is Ca(2+).

It is found in the secreted. It carries out the reaction a 1,2-diacyl-sn-glycero-3-phosphocholine + H2O = a 1-acyl-sn-glycero-3-phosphocholine + a fatty acid + H(+). PLA2 catalyzes the calcium-dependent hydrolysis of the 2-acyl groups in 3-sn-phosphoglycerides. In Laticauda laticaudata (Blue-ringed sea krait), this protein is Basic phospholipase A2 PC17.